The primary structure comprises 97 residues: Peptide YY-A (97 aa).

The first 28 residues, 1–28 (MAVMLKPWTVVATVLICVLLCLGTFVDA), serve as a signal peptide directing secretion. Residue Y64 is modified to Tyrosine amide. A propeptide spans 68 to 97 (STSEDVMAELLFGDDTEHKQRSRYDDSFMW) (C-terminal extension).

It belongs to the NPY family. In terms of tissue distribution, mainly expressed in brainstem neurons, and in the telencephalon. Also expressed in intestinal endocrine cells.

The protein localises to the secreted. In Danio rerio (Zebrafish), this protein is Peptide YY-A (pyya).